A 76-amino-acid chain; its full sequence is Conotoxin VnMEKL-0111 (76 aa).

A signal peptide spans 1 to 18 (MKLTILFLVAAVLMSTQA). The propeptide occupies 19–45 (LIQHDGEKSQKAKMKFLTARTLSAKTR). 3 disulfides stabilise this stretch: Cys49-Cys65, Cys56-Cys70, and Cys64-Cys74.

It belongs to the conotoxin O2 superfamily. In terms of tissue distribution, expressed by the venom duct.

The protein resides in the secreted. The chain is Conotoxin VnMEKL-0111 from Conus ventricosus (Mediterranean cone).